Here is a 79-residue protein sequence, read N- to C-terminus: Small ribosomal subunit protein bS16 (79 aa).

It belongs to the bacterial ribosomal protein bS16 family.

In Nitratidesulfovibrio vulgaris (strain DSM 19637 / Miyazaki F) (Desulfovibrio vulgaris), this protein is Small ribosomal subunit protein bS16.